Here is a 466-residue protein sequence, read N- to C-terminus: uncharacterized protein (466 aa).

Residues 4 to 199 (NHNSKAKRPK…IINVSLQLKL (196 aa)) enclose the C2 NT-type domain. Disordered stretches follow at residues 262–298 (AKPGTNATGNSTSIKSPTSTNHKSSEMTTKPGLSTTI), 374–393 (LGNKASSWPPNPSDDGYSTM), and 400–452 (EKKQ…LTDR). Positions 266–298 (TNATGNSTSIKSPTSTNHKSSEMTTKPGLSTTI) are enriched in polar residues. Residues S433 and S439 each carry the phosphoserine modification.

To S.pombe SpCC1494.08c.

This is an uncharacterized protein from Saccharomyces cerevisiae (strain ATCC 204508 / S288c) (Baker's yeast).